Reading from the N-terminus, the 247-residue chain is UPF0280 protein MmarC7_0482 (247 aa).

Belongs to the UPF0280 family.

The polypeptide is UPF0280 protein MmarC7_0482 (Methanococcus maripaludis (strain C7 / ATCC BAA-1331)).